The following is a 140-amino-acid chain: Profilin-2 (140 aa).

N-acetylalanine is present on A2.

The protein belongs to the profilin family. In terms of assembly, occurs in many kinds of cells as a complex with monomeric actin in a 1:1 ratio. Interacts with PFN2. Interacts with ACTMAP (via N-terminus); the interaction may facilitate efficient cleavage of the acetylated N-terminus of immature actin by ACTMAP.

It is found in the cytoplasm. Its subcellular location is the cytoskeleton. Functionally, binds to actin and affects the structure of the cytoskeleton. At high concentrations, profilin prevents the polymerization of actin, whereas it enhances it at low concentrations. By binding to PIP2, it inhibits the formation of IP3 and DG. The protein is Profilin-2 (Pfn2) of Rattus norvegicus (Rat).